The primary structure comprises 254 residues: HLA class II histocompatibility antigen, DR alpha chain (254 aa).

Residues 1–25 form the signal peptide; sequence MAISGVPVLGFFIIAVLMSAQESWA. Residues 26–109 form an alpha-1 region; sequence IKEEHVIIQA…KRSNYTPITN (84 aa). Topologically, residues 26-216 are extracellular; it reads IKEEHVIIQA…APSPLPETTE (191 aa). Asparagine 103 and asparagine 143 each carry an N-linked (GlcNAc...) asparagine glycan. The interval 110 to 203 is alpha-2; sequence VPPEVTVLTN…GLDEPLLKHW (94 aa). One can recognise an Ig-like C1-type domain in the interval 112-204; that stretch reads PEVTVLTNSP…LDEPLLKHWE (93 aa). Cysteine 132 and cysteine 188 are disulfide-bonded. The segment at 204–216 is connecting peptide; that stretch reads EFDAPSPLPETTE. Residues 217 to 239 form a helical membrane-spanning segment; it reads NVVCALGLTVGLVGIIIGTIFII. Over 240–254 the chain is Cytoplasmic; it reads KGLRKSNAAERRGPL. Lysine 244 is covalently cross-linked (Glycyl lysine isopeptide (Lys-Gly) (interchain with G-Cter in ubiquitin)).

It belongs to the MHC class II family. In terms of assembly, heterotrimer that consists of an alpha chain HLA-DRA, a beta chain HLA-DRB and a peptide (peptide-MHCII). Newly synthesized alpha and beta chains forms a heterodimer (MHCII) that associates with the CD74/invariant chain (Ii) in the endoplasmic reticulum (ER). Ii is a trimer composed of three subunits and each subunit interacts with one MHCII dimer, blocking the peptide-binding cleft. As a result, MHCII molecules cannot bind peptides present in the ER. The complex of MHCII and CD74/Ii is transported in vesicles from ER to Golgi to lysosomes, where it encounters antigenic peptides generated via proteolysis of endocytosed antigens. MHCII dimers are dissociated from CD74/Ii by the combined action of proteolysis and HLA-DM. Lysosomal enzymes such as cathepsin, degrade CD74/Ii leaving a 24 amino acid remnant called class II-associated Ii or CLIP. Interacts (via the peptide binding cleft) with CLIP; this interaction inhibits antigen peptide binding before entry in the endosomal compartment. The displacement of CLIP and replacement by a high affinity peptide in lysosomes is performed by HLA-DM heterodimer. HLA-DM catalyzes CLIP dissociation from MHCII, stabilizes empty MHCII and mediates the selection of high affinity peptides. Interacts with HLA-DM heterodimer; this interaction is direct. Interacts (via alpha-1 domain) with TCR (via CDRs). Interacts (via alpha-2 domain) with CD4 (via Ig-like V-type domain); this interaction increases the affinity of TCR for peptide-MHCII. (Microbial infection) Interacts with Epstein-Barr virus BZLF2/gp42. As to quaternary structure, (Microbial infection) Interacts with Staphylococcus aureus enterotoxin A/entA, enterotoxin B/entB, enterotoxin C1/entC1, enterotoxin D/entD, and enterotoxin H/entH. Ubiquitinated by MARCHF1 or MARCHF8 at Lys-244 leading to down-regulation of MHCII. When associated with ubiquitination of the beta chain at 'Lys-254', the down-regulation of MHCII may be highly effective. As to expression, expressed in professional APCs: macrophages, dendritic cells and B cells (at protein level). Expressed in thymic epithelial cells (at protein level).

Its subcellular location is the cell membrane. It is found in the endoplasmic reticulum membrane. It localises to the early endosome membrane. The protein localises to the late endosome membrane. The protein resides in the lysosome membrane. Its subcellular location is the autolysosome membrane. An alpha chain of antigen-presenting major histocompatibility complex class II (MHCII) molecule. In complex with the beta chain HLA-DRB, displays antigenic peptides on professional antigen presenting cells (APCs) for recognition by alpha-beta T cell receptor (TCR) on HLA-DR-restricted CD4-positive T cells. This guides antigen-specific T-helper effector functions, both antibody-mediated immune response and macrophage activation, to ultimately eliminate the infectious agents and transformed cells. Typically presents extracellular peptide antigens of 10 to 30 amino acids that arise from proteolysis of endocytosed antigens in lysosomes. In the tumor microenvironment, presents antigenic peptides that are primarily generated in tumor-resident APCs likely via phagocytosis of apoptotic tumor cells or macropinocytosis of secreted tumor proteins. Presents peptides derived from intracellular proteins that are trapped in autolysosomes after macroautophagy, a mechanism especially relevant for T cell selection in the thymus and central immune tolerance. The selection of the immunodominant epitopes follows two processing modes: 'bind first, cut/trim later' for pathogen-derived antigenic peptides and 'cut first, bind later' for autoantigens/self-peptides. The anchor residue at position 1 of the peptide N-terminus, usually a large hydrophobic residue, is essential for high affinity interaction with MHCII molecules. In Homo sapiens (Human), this protein is HLA class II histocompatibility antigen, DR alpha chain (HLA-DRA).